The chain runs to 133 residues: UPF0102 protein bll0669 (133 aa).

This sequence belongs to the UPF0102 family.

The sequence is that of UPF0102 protein bll0669 from Bradyrhizobium diazoefficiens (strain JCM 10833 / BCRC 13528 / IAM 13628 / NBRC 14792 / USDA 110).